Consider the following 201-residue polypeptide: 3-isopropylmalate dehydratase small subunit (201 aa).

The protein belongs to the LeuD family. LeuD type 1 subfamily. In terms of assembly, heterodimer of LeuC and LeuD.

The catalysed reaction is (2R,3S)-3-isopropylmalate = (2S)-2-isopropylmalate. It participates in amino-acid biosynthesis; L-leucine biosynthesis; L-leucine from 3-methyl-2-oxobutanoate: step 2/4. In terms of biological role, catalyzes the isomerization between 2-isopropylmalate and 3-isopropylmalate, via the formation of 2-isopropylmaleate. This chain is 3-isopropylmalate dehydratase small subunit, found in Shewanella baltica (strain OS223).